The primary structure comprises 258 residues: Indole-3-glycerol phosphate synthase (258 aa).

Belongs to the TrpC family.

The enzyme catalyses 1-(2-carboxyphenylamino)-1-deoxy-D-ribulose 5-phosphate + H(+) = (1S,2R)-1-C-(indol-3-yl)glycerol 3-phosphate + CO2 + H2O. The protein operates within amino-acid biosynthesis; L-tryptophan biosynthesis; L-tryptophan from chorismate: step 4/5. In Campylobacter jejuni subsp. doylei (strain ATCC BAA-1458 / RM4099 / 269.97), this protein is Indole-3-glycerol phosphate synthase.